The following is a 461-amino-acid chain: Transcription factor phm6 (461 aa).

A DNA-binding region (zn(2)-C6 fungal-type) is located at residues cysteine 18–cysteine 50. 2 disordered regions span residues arginine 55–threonine 79 and leucine 256–threonine 278. Positions leucine 256–serine 274 are enriched in low complexity.

The protein localises to the nucleus. In terms of biological role, transcription factor that regulates the expression of the gene cluster that mediates the biosynthesis of the trans-fused decalin-containing tetramic acid phomasetin. The protein is Transcription factor phm6 of Pyrenochaetopsis sp.